We begin with the raw amino-acid sequence, 666 residues long: MRTSRVASPPPSPKDHDTWAIATDLARPHTLRILTHQNQTTGLLTPPHAAFLPDPNLPRRLPFPSSSSTPTAAAPPDSGEPSRARARTETYRTGDMNPYDLRYADPSSYRDRRSDLAGAPVLAASAPAAANPYAAAYAPAPAAPVAPAGGDFSRFGGRGRGGGAGGGGWGRGGGGGGGAGGYRGGGGRGGGRDALDSLSLPKPDFRSLIPFEKNFYVECPAVQAMSDMDVSQYRRQRDITVEGHDVPKPVRYFQEANFPDYCMQAIAKSGFVEPTPIQSQGWPMALKGRDMIGIAQTGSGKTLSYLLPGLVHVGAQPRLEQGDGPIVLILAPTRELAVQIQQESGKFGSYSRTRSTCIYGGAPKGPQIRDLRRGVEIVIATPGRLIDMLEGGHTNLRRVTYLVLDEADRMLDMGFEPQIRKIVAQIRPDRQTLYWSATWPREVESLARQFLQNPYKVIIGSPDLKANHSIQQIIEVISEHEKYPRLSKLLSDLMDGSRILIFFQTKKDCDKVTRQLRMDGWPALSIHGDKAQAERDYVLAEFKSGKSPIMAATDVAARGLDVKDIKCVINFDFPTTLEDYIHRIGRTGRAGASGTAFTFFTLSNAKFSRNLVKILREAGQVVNPALESMAKSASSMGGGNFRSRGRGGFGNRSGSNSIPIRGRRPY.

The interval 53–102 is disordered; sequence PDPNLPRRLPFPSSSSTPTAAAPPDSGEPSRARARTETYRTGDMNPYDLR. The segment covering 64 to 76 has biased composition (low complexity); it reads PSSSSTPTAAAPP. Residues 80–92 are compositionally biased toward basic and acidic residues; that stretch reads EPSRARARTETYR. A Q motif motif is present at residues 251–279; sequence RYFQEANFPDYCMQAIAKSGFVEPTPIQS. Residues 282–457 form the Helicase ATP-binding domain; sequence WPMALKGRDM…RQFLQNPYKV (176 aa). An ATP-binding site is contributed by 295 to 302; that stretch reads AQTGSGKT. The short motif at 405–408 is the DEAD box element; sequence DEAD. A Helicase C-terminal domain is found at 485–630; the sequence is RLSKLLSDLM…VVNPALESMA (146 aa). The disordered stretch occupies residues 632-666; that stretch reads SASSMGGGNFRSRGRGGFGNRSGSNSIPIRGRRPY. The segment covering 636–651 has biased composition (gly residues); the sequence is MGGGNFRSRGRGGFGN.

This sequence belongs to the DEAD box helicase family. DDX5/DBP2 subfamily.

Its subcellular location is the nucleus. It carries out the reaction ATP + H2O = ADP + phosphate + H(+). In terms of biological role, ATP-dependent RNA helicase involved nonsense-mediated mRNA decay and ribosome biogenesis through rRNA processing. The protein is DEAD-box ATP-dependent RNA helicase 30 of Oryza sativa subsp. japonica (Rice).